Consider the following 89-residue polypeptide: Small ribosomal subunit protein uS15 (89 aa).

This sequence belongs to the universal ribosomal protein uS15 family. As to quaternary structure, part of the 30S ribosomal subunit. Forms a bridge to the 50S subunit in the 70S ribosome, contacting the 23S rRNA.

In terms of biological role, one of the primary rRNA binding proteins, it binds directly to 16S rRNA where it helps nucleate assembly of the platform of the 30S subunit by binding and bridging several RNA helices of the 16S rRNA. Its function is as follows. Forms an intersubunit bridge (bridge B4) with the 23S rRNA of the 50S subunit in the ribosome. In Methylorubrum populi (strain ATCC BAA-705 / NCIMB 13946 / BJ001) (Methylobacterium populi), this protein is Small ribosomal subunit protein uS15.